Reading from the N-terminus, the 292-residue chain is Syntaxin-19 (292 aa).

The segment covering methionine 1–proline 24 has biased composition (basic and acidic residues). The disordered stretch occupies residues methionine 1–alanine 28. Positions valine 46–glutamate 122 form a coiled coil. The region spanning leucine 209 to alanine 271 is the t-SNARE coiled-coil homology domain.

The protein belongs to the syntaxin family. Interacts with EGFR.

Its subcellular location is the cell membrane. The protein localises to the cytoplasm. Plays a role in endosomal trafficking of the epidermal growth factor receptor (EGFR). The polypeptide is Syntaxin-19 (STX19) (Bos taurus (Bovine)).